Here is a 676-residue protein sequence, read N- to C-terminus: Cysteine-rich receptor-like protein kinase 8 (676 aa).

Positions 1–34 are cleaved as a signal peptide; that stretch reads MYIVSMFGLAGLEALICFIFLFLFSFLTSFKASA. The Extracellular segment spans residues 35-291; that stretch reads QNPFYLNHDC…IPGKSGNSTV (257 aa). Gnk2-homologous domains lie at 38–142 and 151–255; these read FYLN…HKNF and ELIM…LYAF. N-linked (GlcNAc...) asparagine glycans are attached at residues Asn-46, Asn-53, Asn-71, Asn-114, Asn-159, Asn-187, Asn-257, and Asn-288. A helical membrane pass occupies residues 292 to 312; the sequence is LVVAIVVLAVLLFIALVGYCF. Residues 313 to 676 are Cytoplasmic-facing; it reads LAQRTKKTFD…DELITDLYPR (364 aa). One can recognise a Protein kinase domain in the interval 353–639; the sequence is FAESNKIGRG…TLPVPRQPGF (287 aa). Residues 359–367 and Lys-381 contribute to the ATP site; that span reads IGRGGFGEV. A Phosphotyrosine modification is found at Tyr-426. Asp-478 serves as the catalytic Proton acceptor. Phosphoserine is present on Ser-482. Thr-518 is subject to Phosphothreonine. Tyr-526 is modified (phosphotyrosine). The tract at residues 640–666 is disordered; it reads FIQSSPVKDPTDSDQSTTTKSTPASID. Residues 652 to 662 are compositionally biased toward low complexity; it reads SDQSTTTKSTP.

Belongs to the protein kinase superfamily. Ser/Thr protein kinase family. CRK subfamily.

The protein resides in the membrane. The catalysed reaction is L-seryl-[protein] + ATP = O-phospho-L-seryl-[protein] + ADP + H(+). It carries out the reaction L-threonyl-[protein] + ATP = O-phospho-L-threonyl-[protein] + ADP + H(+). In Arabidopsis thaliana (Mouse-ear cress), this protein is Cysteine-rich receptor-like protein kinase 8 (CRK8).